The primary structure comprises 444 residues: Probable D-serine dehydratase (444 aa).

K110 is modified (N6-(pyridoxal phosphate)lysine).

The protein belongs to the serine/threonine dehydratase family. DsdA subfamily. The cofactor is pyridoxal 5'-phosphate.

The enzyme catalyses D-serine = pyruvate + NH4(+). This chain is Probable D-serine dehydratase, found in Burkholderia thailandensis (strain ATCC 700388 / DSM 13276 / CCUG 48851 / CIP 106301 / E264).